A 312-amino-acid polypeptide reads, in one-letter code: Olfactory receptor 6X1 (312 aa).

Topologically, residues 1 to 23 (MRNGTVITEFILLGFPVIQGLQT) are extracellular. Asn-3 carries N-linked (GlcNAc...) asparagine glycosylation. The helical transmembrane segment at 24-44 (PLFIAIFLTYILTLAGNGLII) threads the bilayer. Topologically, residues 45-52 (ATVWAEPR) are cytoplasmic. Residues 53–73 (LQIPMYFFLCNLSFLEIWYTT) form a helical membrane-spanning segment. Over 74–97 (TVIPKLLGTFVVARTVICMSCCLL) the chain is Extracellular. An intrachain disulfide couples Cys-95 to Cys-187. A helical membrane pass occupies residues 98-118 (QAFFHFFVGTTEFLILTIMSF). Topologically, residues 119 to 137 (DRYLTICNPLHHPTIMTSK) are cytoplasmic. Residues 138–158 (LCLQLALSSWVVGFTIVFCQT) form a helical membrane-spanning segment. The Extracellular segment spans residues 159–195 (MLLIQLPFCGNNVISHFYCDVGPSLKAACIDTSILEL). A helical membrane pass occupies residues 196–215 (LGVIATILVIPGSLLFNMIS). Topologically, residues 216-235 (YIYILSAILRIPSATGHQKT) are cytoplasmic. A helical transmembrane segment spans residues 236–256 (FSTCASHLTVVSLLYGAVLFM). Residues 257 to 269 (YLRPTAHSSFKIN) are Extracellular-facing. The helical transmembrane segment at 270–290 (KVVSVLNTILTPLLNPFIYTI) threads the bilayer. Residues 291–312 (RNKEVKGALRKAMTCPKTGHAK) lie on the Cytoplasmic side of the membrane.

The protein belongs to the G-protein coupled receptor 1 family.

The protein localises to the cell membrane. Functionally, odorant receptor. This chain is Olfactory receptor 6X1 (OR6X1), found in Homo sapiens (Human).